Reading from the N-terminus, the 355-residue chain is Probable dual-specificity RNA methyltransferase RlmN (355 aa).

Glutamate 89 serves as the catalytic Proton acceptor. Residues 95-322 (YENRKTVCLS…KRLGVPTSIR (228 aa)) form the Radical SAM core domain. Cysteine 102 and cysteine 333 are oxidised to a cystine. Positions 109, 113, and 116 each coordinate [4Fe-4S] cluster. Residues 159-160 (GE), serine 191, 214-216 (SLH), and asparagine 290 each bind S-adenosyl-L-methionine. Cysteine 333 functions as the S-methylcysteine intermediate in the catalytic mechanism.

It belongs to the radical SAM superfamily. RlmN family. [4Fe-4S] cluster is required as a cofactor.

It is found in the cytoplasm. It carries out the reaction adenosine(2503) in 23S rRNA + 2 reduced [2Fe-2S]-[ferredoxin] + 2 S-adenosyl-L-methionine = 2-methyladenosine(2503) in 23S rRNA + 5'-deoxyadenosine + L-methionine + 2 oxidized [2Fe-2S]-[ferredoxin] + S-adenosyl-L-homocysteine. The enzyme catalyses adenosine(37) in tRNA + 2 reduced [2Fe-2S]-[ferredoxin] + 2 S-adenosyl-L-methionine = 2-methyladenosine(37) in tRNA + 5'-deoxyadenosine + L-methionine + 2 oxidized [2Fe-2S]-[ferredoxin] + S-adenosyl-L-homocysteine. In terms of biological role, specifically methylates position 2 of adenine 2503 in 23S rRNA and position 2 of adenine 37 in tRNAs. The sequence is that of Probable dual-specificity RNA methyltransferase RlmN from Thermus thermophilus (strain ATCC 27634 / DSM 579 / HB8).